We begin with the raw amino-acid sequence, 862 residues long: Autotaxin (862 aa).

A signal peptide spans 1-27; that stretch reads MARQGCFGSYQVISLFTFAIGVNLCLG. The propeptide at 28 to 35 is removed by furin; the sequence is FTASRIKR. A glycan (N-linked (GlcNAc...) asparagine) is linked at Asn-53. SMB domains are found at residues 54-97 and 98-142; these read TSGS…LKTA and RGWE…GESH. Cystine bridges form between Cys-58–Cys-75, Cys-62–Cys-93, Cys-73–Cys-86, Cys-79–Cys-85, Cys-102–Cys-119, Cys-107–Cys-137, Cys-117–Cys-130, Cys-123–Cys-129, Cys-148–Cys-194, and Cys-156–Cys-350. A Cell attachment site motif is present at residues 126-128; the sequence is RGD. Positions 144–501 are phosphodiesterase domain; that stretch reads VDDDCEEIRV…PTFKYRTKVP (358 aa). Residues Asp-171 and Thr-209 each contribute to the Zn(2+) site. Thr-209 (nucleophile) is an active-site residue. Positions 209, 230, and 311 each coordinate 1-(9Z-octadecenoyl)-sn-glycero-3-phosphate. The 1-hexadecanoyl-sn-glycero-3-phosphate site is built by Thr-209, Asn-230, and Asp-311. Thr-209, Asn-230, and Asp-311 together coordinate 1-tetradecanoyl-sn-glycerol 3-phosphate. Zn(2+) contacts are provided by Asp-311, His-315, Asp-358, and His-359. Disulfide bonds link Cys-366–Cys-468, Cys-413–Cys-805, Cys-566–Cys-666, Cys-568–Cys-651, and Cys-774–Cys-784. Asn-410 is a glycosylation site (N-linked (GlcNAc...) asparagine). A Zn(2+)-binding site is contributed by His-474. His-474 is a 1-(9Z-octadecenoyl)-sn-glycero-3-phosphate binding site. His-474 provides a ligand contact to 1-hexadecanoyl-sn-glycero-3-phosphate. Residue His-474 coordinates 1-tetradecanoyl-sn-glycerol 3-phosphate. An N-linked (GlcNAc...) asparagine glycan is attached at Asn-524. The tract at residues 597-862 is nuclease-like domain; it reads LYGRPAVLYR…TYLHTYESEI (266 aa). The Ca(2+) site is built by Asp-739, Asn-741, Asn-743, Leu-745, and Asp-747. Residue Asn-806 is glycosylated (N-linked (GlcNAc...) asparagine). Residues 829–850 are required for secretion; sequence IEHLTGLDFYRKTSRSYSEILT.

It belongs to the nucleotide pyrophosphatase/phosphodiesterase family. It depends on Zn(2+) as a cofactor. Ca(2+) is required as a cofactor. Post-translationally, N-glycosylation, but not furin-cleavage, plays a critical role on secretion and on lysoPLD activity. Secretion requires simultaneous glycosylation on Asn-53 and Asn-410, while probable glycosylation of Asn-410 has a preferential role on lysoPLD activity. Not O-glycosylated. In terms of processing, the interdomain disulfide bond between Cys-413 and Cys-805 is essential for catalytic activity. As to expression, expressed in brain and adipose tissue.

The protein resides in the secreted. It catalyses the reaction a 1-O-alkyl-sn-glycero-3-phosphoethanolamine + H2O = a 1-O-alkyl-sn-glycero-3-phosphate + ethanolamine + H(+). It carries out the reaction a 1-acyl-sn-glycero-3-phosphoethanolamine + H2O = a 1-acyl-sn-glycero-3-phosphate + ethanolamine + H(+). The catalysed reaction is 1-(9Z-octadecenoyl)-sn-glycero-3-phosphoethanolamine + H2O = 1-(9Z-octadecenoyl)-sn-glycero-3-phosphate + ethanolamine + H(+). The enzyme catalyses a 1-O-alkyl-sn-glycero-3-phosphocholine + H2O = a 1-O-alkyl-sn-glycero-3-phosphate + choline + H(+). It catalyses the reaction 1-O-(9Z-octadecenyl)-sn-glycero-3-phosphocholine + H2O = 1-O-(9Z-octadecenyl)-sn-glycero-3-phosphate + choline + H(+). It carries out the reaction 1-O-hexadecyl-sn-glycero-3-phosphocholine + H2O = 1-O-hexadecyl-sn-glycero-3-phosphate + choline + H(+). The catalysed reaction is a 1-O-(1Z-alkenyl)-sn-glycero-3-phosphocholine + H2O = a 1-O-(1Z-alkenyl)-sn-glycero-3-phosphate + choline + H(+). The enzyme catalyses a 1-acyl-sn-glycero-3-phosphocholine + H2O = a 1-acyl-sn-glycero-3-phosphate + choline + H(+). It catalyses the reaction 1-dodecanoyl-sn-glycero-3-phosphocholine + H2O = 1-dodecanoyl-sn-glycerol 3-phosphate + choline + H(+). It carries out the reaction 1-(9Z-octadecenoyl)-sn-glycero-3-phosphocholine + H2O = 1-(9Z-octadecenoyl)-sn-glycero-3-phosphate + choline + H(+). The catalysed reaction is 1-tetradecanoyl-sn-glycero-3-phosphocholine + H2O = 1-tetradecanoyl-sn-glycerol 3-phosphate + choline + H(+). The enzyme catalyses 1-decanoyl-sn-glycero-3-phosphocholine + H2O = 1-decanoyl-sn-glycero-3-phosphate + choline + H(+). It catalyses the reaction 1-octadecanoyl-sn-glycero-3-phosphocholine + H2O = 1-octadecanoyl-sn-glycero-3-phosphate + choline + H(+). It carries out the reaction 1-hexadecanoyl-sn-glycero-3-phosphocholine + H2O = 1-hexadecanoyl-sn-glycero-3-phosphate + choline + H(+). The catalysed reaction is 1-hexanoyl-sn-glycero-3-phosphocholine + H2O = 1-hexanoyl-sn-glycero-3-phosphate + choline + H(+). The enzyme catalyses 1-(9Z,12Z)-octadecadienoyl-sn-glycero-3-phosphocholine + H2O = 1-(9Z,12Z)-octadecadienoyl-sn-glycero-3-phosphate + choline + H(+). It catalyses the reaction sphing-4-enine-phosphocholine + H2O = sphing-4-enine 1-phosphate + choline + H(+). It carries out the reaction 1-(5Z,8Z,11Z,14Z-eicosatetraenoyl)-sn-glycero-3-phosphocholine + H2O = 1-(5Z,8Z,11Z,14Z-eicosatetraenoyl)-sn-glycero-3-phosphate + choline + H(+). The catalysed reaction is a 2-acyl-sn-glycero-3-phosphocholine + H2O = a 2-acyl-sn-glycerol 3-phosphate + choline + H(+). The enzyme catalyses a 1,2-diacyl-sn-glycero-3-phosphocholine + H2O = a 1,2-diacyl-sn-glycero-3-phosphate + choline + H(+). It catalyses the reaction 1,2-dioctanoyl-sn-glycero-3-phosphocholine + H2O = 1,2-dioctanoyl-sn-glycero-3-phosphate + choline + H(+). It carries out the reaction 1,2-didecanoyl-sn-glycero-3-phosphocholine + H2O = 1,2-didecanoyl-sn-glycero-3-phosphate + choline + H(+). The catalysed reaction is a 1-acyl-sn-glycero-3-phospho-L-serine + H2O = a 1-acyl-sn-glycero-3-phosphate + L-serine + H(+). The enzyme catalyses 1-(9Z-octadecenoyl)-sn-glycero-3-phospho-L-serine + H2O = 1-(9Z-octadecenoyl)-sn-glycero-3-phosphate + L-serine + H(+). It catalyses the reaction a 2-acyl-sn-glycero-3-phospho-L-serine + H2O = a 2-acyl-sn-glycerol 3-phosphate + L-serine + H(+). Its activity is regulated as follows. Inhibited by EDTA and EGTA. In terms of biological role, secreted lysophospholipase D that hydrolyzes lysophospholipids to produce the signaling molecule lysophosphatidic acid (LPA) in extracellular fluids. Its major substrate is lysophosphatidylcholine. Can also act on sphingosylphosphorylcholine producing sphingosine-1-phosphate, a modulator of cell motility. Can hydrolyze, in vitro, bis-pNPP, to some extent pNP-TMP, and barely ATP. Involved in several motility-related processes such as angiogenesis and neurite outgrowth. Acts as an angiogenic factor by stimulating migration of smooth muscle cells and microtubule formation. Stimulates migration of melanoma cells, probably via a pertussis toxin-sensitive G protein. May have a role in induction of parturition. Possible involvement in cell proliferation and adipose tissue development. Required for LPA production in activated platelets, cleaves the sn-1 lysophospholipids to generate sn-1 lysophosphatidic acids containing predominantly 18:2 and 20:4 fatty acids. Shows a preference for the sn-1 to the sn-2 isomer of 1-O-alkyl-sn-glycero-3-phosphocholine (lyso-PAF). The sequence is that of Autotaxin from Mus musculus (Mouse).